A 329-amino-acid polypeptide reads, in one-letter code: Replication factor C small subunit (329 aa).

ATP is bound at residue 51-58; that stretch reads GPPGTGKT.

This sequence belongs to the activator 1 small subunits family. RfcS subfamily. In terms of assembly, heteromultimer composed of small subunits (RfcS) and large subunits (RfcL).

Part of the RFC clamp loader complex which loads the PCNA sliding clamp onto DNA. The protein is Replication factor C small subunit of Staphylothermus marinus (strain ATCC 43588 / DSM 3639 / JCM 9404 / F1).